The following is a 677-amino-acid chain: Serine protease SPPA, chloroplastic (677 aa).

A chloroplast-targeting transit peptide spans 1-68 (MAKLLLLHAP…RAFDDSPASS (68 aa)). The disordered stretch occupies residues 63 to 94 (DSPASSAEMEKEKQEQLLDGVSGKKDEDYPTG). Residues 70–90 (EMEKEKQEQLLDGVSGKKDED) show a composition bias toward basic and acidic residues. Ser-460 (nucleophile) is an active-site residue.

This sequence belongs to the peptidase S49 family.

It is found in the plastid. The protein resides in the chloroplast stroma. Its subcellular location is the chloroplast thylakoid membrane. Its function is as follows. Serine protease that may be involved in the light-dependent degradation of antenna and photosystem II in chloroplasts. May function during high light acclimation in plastids. This Arabidopsis thaliana (Mouse-ear cress) protein is Serine protease SPPA, chloroplastic (SPPA).